The chain runs to 357 residues: Arginine kinase Pro c 2.0101 (357 aa).

The Phosphagen kinase N-terminal domain maps to 9-91 (KLEEGFKKLE…FDPIIEDYHK (83 aa)). 64 to 68 (GVGIY) serves as a coordination point for L-arginine. In terms of domain architecture, Phosphagen kinase C-terminal spans 119–356 (FVISTRVRCG…LELIKIEKEM (238 aa)). Residues 122-126 (STRVR) and histidine 185 each bind ATP. Position 225 (glutamate 225) interacts with L-arginine. Arginine 229 lines the ATP pocket. An L-arginine-binding site is contributed by cysteine 271. Residues 280 to 284 (RASVH) and 309 to 314 (RGTRGE) contribute to the ATP site. Glutamate 314 serves as a coordination point for L-arginine.

Belongs to the ATP:guanido phosphotransferase family. Post-translationally, glycosylated. In terms of tissue distribution, muscle (at protein level).

The catalysed reaction is L-arginine + ATP = N(omega)-phospho-L-arginine + ADP + H(+). Its function is as follows. Catalyzes the reversible transfer of high energy ATP gamma-phosphate group to L-arginine. This chain is Arginine kinase Pro c 2.0101, found in Procambarus clarkii (Red swamp crayfish).